Reading from the N-terminus, the 968-residue chain is RNA polymerase-associated protein RapA (968 aa).

The 171-residue stretch at Asp164 to Asn334 folds into the Helicase ATP-binding domain. Asp177–Thr184 provides a ligand contact to ATP. A DEAH box motif is present at residues Asp280–His283. The Helicase C-terminal domain occupies Arg490–Gly662.

This sequence belongs to the SNF2/RAD54 helicase family. RapA subfamily. Interacts with the RNAP. Has a higher affinity for the core RNAP than for the holoenzyme. Its ATPase activity is stimulated by binding to RNAP.

Transcription regulator that activates transcription by stimulating RNA polymerase (RNAP) recycling in case of stress conditions such as supercoiled DNA or high salt concentrations. Probably acts by releasing the RNAP, when it is trapped or immobilized on tightly supercoiled DNA. Does not activate transcription on linear DNA. Probably not involved in DNA repair. The protein is RNA polymerase-associated protein RapA of Escherichia coli (strain 55989 / EAEC).